Reading from the N-terminus, the 146-residue chain is Ribonuclease H (146 aa).

Positions 1–143 constitute an RNase H type-1 domain; it reads MQKKITIYTD…CDELARQAIQ (143 aa). D10, E48, D70, and D135 together coordinate Mg(2+).

Belongs to the RNase H family. Monomer. The cofactor is Mg(2+).

Its subcellular location is the cytoplasm. The enzyme catalyses Endonucleolytic cleavage to 5'-phosphomonoester.. In terms of biological role, endonuclease that specifically degrades the RNA of RNA-DNA hybrids. The chain is Ribonuclease H from Chlorobium luteolum (strain DSM 273 / BCRC 81028 / 2530) (Pelodictyon luteolum).